Here is a 247-residue protein sequence, read N- to C-terminus: Calpain small subunit 2 (247 aa).

Positions 88, 91, 93, 131, 133, 135, 137, 142, 161, 163, 165, and 204 each coordinate Ca(2+). 4 consecutive EF-hand domains span residues 118–151 (FSLDTCRSIVSVMDSDTTGKLGFEEFKYLWNNIK), 148–183 (NNIKKWQCVFKQYDSDHSGSLGSSQLHGAMQAAGFQ), 184–212 (LNEQLYLMIVRRYADEDGGMDFNNFISCL), and 213–247 (VRLDAMFRAFKALDRDRDGLIQVSIREWLQLTMYS).

In terms of assembly, heterodimer of a large (catalytic) and a small (regulatory) subunit.

The protein resides in the cytoplasm. The protein localises to the cell membrane. Its function is as follows. Calcium-regulated non-lysosomal thiol-protease which catalyzes limited proteolysis of substrates involved in cytoskeletal remodeling and signal transduction. This small subunit may act as a tissue-specific chaperone of the large subunit, possibly by helping it fold into its correct conformation for activity. The chain is Calpain small subunit 2 (Capns2) from Mus musculus (Mouse).